Reading from the N-terminus, the 198-residue chain is ATP synthase protein MI25 (198 aa).

The chain crosses the membrane as a helical span at residues 29–49 (ISIYNEEMIVALCFIGFIIFS).

The protein belongs to the ATPase protein MI25 family. F-type ATPases have 2 components, CF(1) - the catalytic core - and CF(0) - the membrane proton channel. CF(1) has five subunits: alpha(3), beta(3), gamma(1), delta(1), epsilon(1). CF(0) has three main subunits: a, b and c.

It localises to the mitochondrion membrane. Its function is as follows. This is one of the chains of the nonenzymatic component (CF(0) subunit) of the mitochondrial ATPase complex. The chain is ATP synthase protein MI25 from Nicotiana tabacum (Common tobacco).